Here is a 439-residue protein sequence, read N- to C-terminus: Nitroalkane oxidase (439 aa).

FAD-binding positions include L131–S134, T139–N141, W169–S171, R304, H313–Q314, K375–M379, and L400–G404. D402 functions as the Proton acceptor in the catalytic mechanism.

Belongs to the acyl-CoA dehydrogenase family. In terms of assembly, homotetramer. FAD serves as cofactor.

The catalysed reaction is a primary nitroalkane + O2 + H2O = an aldehyde + nitrite + H2O2 + H(+). The enzyme catalyses a secondary nitroalkane + O2 + H2O = a ketone + nitrite + H2O2 + H(+). Its activity is regulated as follows. Strongly inhibited by mercury chloride and KCN. Its function is as follows. Catalyzes the oxidative denitrification of neutral nitroalkanes, including 3-nitro-2-pentanol, 1-nitropropane, 2-nitropropane, nitroethane and nitrocyclohexane, and may thereby protect the organism against toxic compounds. Has no detectable acyl-CoA dehydrogenase activity. This is Nitroalkane oxidase from Fusarium oxysporum (Fusarium vascular wilt).